A 190-amino-acid chain; its full sequence is Dynactin subunit 6 (190 aa).

The residue at position 186 (Thr186) is a Phosphothreonine; by CDK1.

The protein belongs to the dynactin subunits 5/6 family. Dynactin subunit 6 subfamily. As to quaternary structure, subunit of dynactin, a multiprotein complex part of a tripartite complex with dynein and a adapter, such as BICDL1, BICD2 or HOOK3. The dynactin complex is built around ACTR1A/ACTB filament and consists of an actin-related filament composed of a shoulder domain, a pointed end and a barbed end. Its length is defined by its flexible shoulder domain. The soulder is composed of 2 DCTN1 subunits, 4 DCTN2 and 2 DCTN3. The 4 DCNT2 (via N-terminus) bind the ACTR1A filament and act as molecular rulers to determine the length. The pointed end is important for binding dynein-dynactin cargo adapters. Consists of 4 subunits: ACTR10, DCNT4, DCTN5 and DCTN6. Within the complex DCTN6 forms a heterodimer with DCTN5. The barbed end is composed of a CAPZA1:CAPZB heterodimers, which binds ACTR1A/ACTB filament and dynactin and stabilizes dynactin. Interacts with PLK1. Interacts with N4BP2L1. Phosphorylation at Thr-186 by CDK1 during mitotic prometaphase creates a binding site for PLK1 that facilitates its recruitment to kinetochores. As to expression, ubiquitous.

It localises to the cytoplasm. The protein resides in the cytoskeleton. Its subcellular location is the chromosome. It is found in the centromere. The protein localises to the kinetochore. Part of the dynactin complex that activates the molecular motor dynein for ultra-processive transport along microtubules. This is Dynactin subunit 6 from Homo sapiens (Human).